The sequence spans 396 residues: Phosphopentomutase (396 aa).

Residues aspartate 14, aspartate 286, histidine 291, aspartate 327, histidine 328, and histidine 339 each contribute to the Mn(2+) site.

Belongs to the phosphopentomutase family. Mn(2+) is required as a cofactor.

It is found in the cytoplasm. It catalyses the reaction 2-deoxy-alpha-D-ribose 1-phosphate = 2-deoxy-D-ribose 5-phosphate. The catalysed reaction is alpha-D-ribose 1-phosphate = D-ribose 5-phosphate. It participates in carbohydrate degradation; 2-deoxy-D-ribose 1-phosphate degradation; D-glyceraldehyde 3-phosphate and acetaldehyde from 2-deoxy-alpha-D-ribose 1-phosphate: step 1/2. Its function is as follows. Isomerase that catalyzes the conversion of deoxy-ribose 1-phosphate (dRib-1-P) and ribose 1-phosphate (Rib-1-P) to deoxy-ribose 5-phosphate (dRib-5-P) and ribose 5-phosphate (Rib-5-P), respectively. This Staphylococcus carnosus (strain TM300) protein is Phosphopentomutase.